Consider the following 288-residue polypeptide: Probable prolyl 4-hydroxylase 9 (288 aa).

The Cytoplasmic segment spans residues 1–12 (MKSRLKSYRRKK). Residues 13-33 (LGLATVIVFCSLCFLFGFYGS) traverse the membrane as a helical; Signal-anchor for type II membrane protein segment. Topologically, residues 34-288 (TLLSQNVPRV…KWIRDQDQEE (255 aa)) are lumenal. Residues 164-283 (HGESFNILRY…KWVATKWIRD (120 aa)) enclose the Fe2OG dioxygenase domain. The Fe cation site is built by His182 and Asp184. Residues Asn221 and Asn255 are each glycosylated (N-linked (GlcNAc...) asparagine). His264 provides a ligand contact to Fe cation. Residue Lys274 coordinates 2-oxoglutarate.

Belongs to the P4HA family. Requires Fe(2+) as cofactor. L-ascorbate is required as a cofactor.

It is found in the endoplasmic reticulum membrane. Its subcellular location is the golgi apparatus. The enzyme catalyses L-prolyl-[collagen] + 2-oxoglutarate + O2 = trans-4-hydroxy-L-prolyl-[collagen] + succinate + CO2. In terms of biological role, catalyzes the post-translational formation of 4-hydroxyproline in -Xaa-Pro-Gly- sequences in proline-rich peptide sequences of plant glycoproteins and other proteins. Hydroxyprolines are important constituent of many plant cell wall glycoproteins such as extensins, hydroxyproline-rich glycoproteins, lectins and arabinogalactan proteins. The chain is Probable prolyl 4-hydroxylase 9 from Arabidopsis thaliana (Mouse-ear cress).